Here is a 2280-residue protein sequence, read N- to C-terminus: Protein Ycf2 (2280 aa).

1634–1641 (GSIGTGRS) serves as a coordination point for ATP.

Belongs to the Ycf2 family.

Its subcellular location is the plastid. It is found in the chloroplast stroma. Probable ATPase of unknown function. Its presence in a non-photosynthetic plant (Epifagus virginiana) and experiments in tobacco indicate that it has an essential function which is probably not related to photosynthesis. This is Protein Ycf2 from Eucalyptus globulus subsp. globulus (Tasmanian blue gum).